Reading from the N-terminus, the 702-residue chain is Polyribonucleotide nucleotidyltransferase 3 (702 aa).

2 residues coordinate Mg(2+): aspartate 483 and aspartate 489. The region spanning 550-609 (PKVTQIKVHPDKVREVIGAGGKVINKIIDETGCKITIENDGTIYVAAPDQESSRRAVEMI) is the KH domain. In terms of domain architecture, S1 motif spans 619–687 (GEVYTGKVIK…PQGKIGLSRK (69 aa)).

This sequence belongs to the polyribonucleotide nucleotidyltransferase family. Requires Mg(2+) as cofactor.

It localises to the cytoplasm. It carries out the reaction RNA(n+1) + phosphate = RNA(n) + a ribonucleoside 5'-diphosphate. Functionally, involved in mRNA degradation. Catalyzes the phosphorolysis of single-stranded polyribonucleotides processively in the 3'- to 5'-direction. The sequence is that of Polyribonucleotide nucleotidyltransferase 3 from Alkaliphilus metalliredigens (strain QYMF).